A 534-amino-acid polypeptide reads, in one-letter code: MKKIAIVGAGPTGIYTLFSLLQQQTPLSISIFEQADEAGVGMPYSDEENSKMMLANIASIEIPPIYCTYLEWLQKQEDSHLQRYGVKKETLHDRQFLPRILLGEYFRDQFLRLVDQARQQKFAVAVYESCQVTDLQITNAGVMLATNQDLPSETFDLAVIATGHVWPDEEEATRTYFPSPWSGLMEAKVDACNVGIMGTSLSGLDAAMAVAIQHGSFIEDDKQHVVFHRDNASEKLNITLLSRTGILPEADFYCPIPYEPLHIVTDQALNAEIQKGEEGLLDRVFRLIVEEIKFADPDWSQRIALESLNVDSFAQAWFAERKQRDPFDWAEKNLQEVERNKREKHTVPWRYVILRLHEAVQEIVPHLNEHDHKRFSKGLARVFIDNYAAIPSESIRRLLALREAGIIHILALGEDYKMEINESRTVLKTEDNSYSFDVFIDARGQRPLKVKDIPFPGLREQLQKTGDEIPDVGEDYTLQQPEDIRGRVAFGALPWLMHDQPFVQGLTACAEIGEAMARAVVKPASRARRRLSFD.

This is an uncharacterized protein from Escherichia coli (strain K12).